The following is a 290-amino-acid chain: 33 kDa chaperonin (290 aa).

Cystine bridges form between cysteine 235-cysteine 237 and cysteine 268-cysteine 271.

The protein belongs to the HSP33 family. Under oxidizing conditions two disulfide bonds are formed involving the reactive cysteines. Under reducing conditions zinc is bound to the reactive cysteines and the protein is inactive.

It localises to the cytoplasm. Redox regulated molecular chaperone. Protects both thermally unfolding and oxidatively damaged proteins from irreversible aggregation. Plays an important role in the bacterial defense system toward oxidative stress. This chain is 33 kDa chaperonin, found in Streptococcus pyogenes serotype M2 (strain MGAS10270).